Consider the following 460-residue polypeptide: Putative E3 ubiquitin-protein ligase RING1b (460 aa).

Residues 1 to 85 (MPSLKSFSAA…SQSSSAGELS (85 aa)) form a disordered region. Positions 21-31 (SEAERFNPEAV) are enriched in basic and acidic residues. 2 stretches are compositionally biased toward acidic residues: residues 32 to 51 (EKEE…DEED) and 59 to 71 (EAED…EEED). Residues 103–143 (CSICLGIIRKTRTVMECLHRFCRECIDKSMRLGNNECPTCR) form an RING-type zinc finger. The tract at residues 196-300 (QVSQRQSKAL…TEQTHQRDSR (105 aa)) is disordered. A compositionally biased stretch (basic residues) spans 220–234 (RSRRSGGGSRRRRNC). Positions 240–249 (DTSEANDDDD) are enriched in acidic residues. The span at 250–265 (QNKRGKDSSSDEPCER) shows a compositional bias: basic and acidic residues. Over residues 276 to 290 (SSSNANNNDNCAGNG) the composition is skewed to low complexity.

As to quaternary structure, heterodimer with RING1A. Interacts with CLF. Component of the PRC1-like complex, at least composed of RING1A, RING1B and LHP1.

Its subcellular location is the nucleus. The catalysed reaction is S-ubiquitinyl-[E2 ubiquitin-conjugating enzyme]-L-cysteine + [acceptor protein]-L-lysine = [E2 ubiquitin-conjugating enzyme]-L-cysteine + N(6)-ubiquitinyl-[acceptor protein]-L-lysine.. It functions in the pathway protein modification; protein ubiquitination. Functionally, putative E3 ubiquitin-protein ligase that mediates monoubiquitination of 'Lys-119' of histone H2A (H2AK119ub), thereby playing a central role in histone code and gene regulation. Its function is as follows. As part of the PRC1-like complex, repress class I KNOX gene expression. PcG PRC1 complex maintains the transcriptionally repressive state of many genes, including Hox genes, throughout development. PcG PRC1 complex acts via chromatin remodeling and modification of histones, rendering chromatin heritably changed in its expressibility. The chain is Putative E3 ubiquitin-protein ligase RING1b (RING1B) from Arabidopsis thaliana (Mouse-ear cress).